A 104-amino-acid polypeptide reads, in one-letter code: MAAKIRKGDKVIVLTGRDKGRTGEVFEVRPADNKALVRGINIVKRHQKQTQAQEGGIISKEAPINLSNIAIVGKDGKPTRVGFKIQADGKKVRVAKRSGAEIDV.

It belongs to the universal ribosomal protein uL24 family. As to quaternary structure, part of the 50S ribosomal subunit.

Its function is as follows. One of two assembly initiator proteins, it binds directly to the 5'-end of the 23S rRNA, where it nucleates assembly of the 50S subunit. In terms of biological role, one of the proteins that surrounds the polypeptide exit tunnel on the outside of the subunit. The chain is Large ribosomal subunit protein uL24 from Rhodopseudomonas palustris (strain BisA53).